The chain runs to 391 residues: Probable malate dehydrogenase 1 (391 aa).

68 to 74 (GAAGQIA) serves as a coordination point for NAD(+). Substrate contacts are provided by R149 and R155. NAD(+) contacts are provided by residues N162, Q169, and 186 to 188 (VGN). Substrate contacts are provided by N188 and R219. H244 functions as the Proton acceptor in the catalytic mechanism.

The protein belongs to the LDH/MDH superfamily. MDH type 2 family. In terms of assembly, homodimer.

The catalysed reaction is (S)-malate + NAD(+) = oxaloacetate + NADH + H(+). Its function is as follows. Catalyzes the reversible oxidation of malate to oxaloacetate. In Dictyostelium discoideum (Social amoeba), this protein is Probable malate dehydrogenase 1 (mdhA).